The sequence spans 62 residues: Large ribosomal subunit protein bL33 (62 aa).

Belongs to the bacterial ribosomal protein bL33 family.

The sequence is that of Large ribosomal subunit protein bL33 from Bacteroides fragilis (strain ATCC 25285 / DSM 2151 / CCUG 4856 / JCM 11019 / LMG 10263 / NCTC 9343 / Onslow / VPI 2553 / EN-2).